Reading from the N-terminus, the 660-residue chain is MSARLRVEELRAELQRRGLDASGNKPVLVRRLDAAIRKEEEEEAAVSAAAKEEADAGGVVDGEGNGEDKRKRKRRGDGEDVDNSESDAAKLEGMSYRELQALAKSRGLAANGSKKEVIERLLCAPSDTDGGVQDKKKIAKGFADGDDRVEECRKEKIVTATRKGAAVLDQHIPDHIKMTYHVLQVWFLLKGDEIYDATMNQTNVGDNNNKFYIIQALESDAGGSFMVYNRWGRVGARGQDKLHGPFSSREQAIYEFEGKFHGKTNNHWSDRKSFECYARKYTWLEMDYGEADRETNKKVSPSTDQIKETKLETRIASFISLICNISMMKQQMVEIGYNSDKLPLGKLSKSTIFKGYDVLKRISNVISRADRRQLEQLTGEFYTVIPHDFGFKKMREFIIDTPQKLKAKLEMVEALGEIEIATKLLEDDSTDQDDPLYARYKQLSCDFTPLEVGSEEYSMIKTYLANTHGKTHTSYTVDVVQIFKVSRHGEMERFQKFATAGNRMLLWHGSRLTNWAGILSQGLRIAPPEAPVTGYMFGKGVYFADMFSKSANYCYASEACRSGVLLLCEVALGEMNELLNADYDANNLPKGKLSTKGVGQTEPNTAESKITDDGVVVPLGKPKAEPSKRGSLLYNEFIVYNVDQIRMRYVLHVSFNFKKR.

The 35-residue stretch at 2–36 (SARLRVEELRAELQRRGLDASGNKPVLVRRLDAAI) folds into the SAP 1 domain. Residues 40–92 (EEEEAAVSAAAKEEADAGGVVDGEGNGEDKRKRKRRGDGEDVDNSESDAAKLE) are disordered. The Nuclear localization signal signature appears at 69–75 (KRKRKRR). The SAP 2 domain maps to 91 to 125 (LEGMSYRELQALAKSRGLAANGSKKEVIERLLCAP). One can recognise a WGR domain in the interval 179–281 (TYHVLQVWFL…KSFECYARKY (103 aa)). A PARP alpha-helical domain is found at 308 to 426 (ETKLETRIAS…EIEIATKLLE (119 aa)). The region spanning 434 to 660 (DPLYARYKQL…LHVSFNFKKR (227 aa)) is the PARP catalytic domain.

This sequence belongs to the ARTD/PARP family.

It localises to the nucleus. It carries out the reaction NAD(+) + (ADP-D-ribosyl)n-acceptor = nicotinamide + (ADP-D-ribosyl)n+1-acceptor + H(+).. It catalyses the reaction L-aspartyl-[protein] + NAD(+) = 4-O-(ADP-D-ribosyl)-L-aspartyl-[protein] + nicotinamide. The catalysed reaction is L-glutamyl-[protein] + NAD(+) = 5-O-(ADP-D-ribosyl)-L-glutamyl-[protein] + nicotinamide. In terms of biological role, involved in the base excision repair (BER) pathway, by catalyzing the poly(ADP-ribosyl)ation of a limited number of acceptor proteins involved in chromatin architecture and in DNA metabolism. This modification follows DNA damages and appears as an obligatory step in a detection/signaling pathway leading to the reparation of DNA strand breaks. The protein is Poly [ADP-ribose] polymerase 2-A (PARP2-A) of Oryza sativa subsp. japonica (Rice).